The sequence spans 643 residues: Mitochondrial Rho GTPase 2 (643 aa).

Residues 1 to 611 (MMLGGKSSAG…SGRRSRNIRQ (611 aa)) are Cytoplasmic-facing. The Miro 1 domain occupies 12-179 (RTSLRVAVAG…FYFASKAVLH (168 aa)). EF-hand domains lie at 195 to 230 (RLRR…CFGA) and 315 to 350 (EAMD…APDS). Residues Asp-208, Asp-210, Asp-212, Glu-219, Asp-328, Asp-330, Asp-332, and Glu-339 each coordinate Ca(2+). The 170-residue stretch at 423-592 (RNVFQCFVFG…FSRIVSTAEN (170 aa)) folds into the Miro 2 domain. The chain crosses the membrane as a helical span at residues 612 to 632 (LVNSSLLFVSVGTAVGFAGLA). Residues 633–643 (AYRAYSARKNA) are Mitochondrial intermembrane-facing.

This sequence belongs to the mitochondrial Rho GTPase family. In terms of tissue distribution, expressed roots, rosette and cauline leaves, stems, flowers and siliques.

Its subcellular location is the mitochondrion outer membrane. Its activity is regulated as follows. Activated by calcium. In terms of biological role, calcium-binding mitochondrial GTPase involved in calcium signaling during salt stress response. May play a role in the progression of embryonic cell division, development of haploid male and female gametes, and pollen tube growth. This chain is Mitochondrial Rho GTPase 2, found in Arabidopsis thaliana (Mouse-ear cress).